The chain runs to 437 residues: RING finger protein 150 (437 aa).

An N-terminal signal peptide occupies residues methionine 1–alanine 34. At glutamate 35–serine 207 the chain is on the extracellular side. N-linked (GlcNAc...) asparagine glycosylation is found at asparagine 45, asparagine 124, asparagine 152, and asparagine 185. A PA domain is found at serine 80 to leucine 182. A helical membrane pass occupies residues valine 208–phenylalanine 228. Residues tyrosine 229–serine 437 lie on the Cytoplasmic side of the membrane. The segment at cysteine 277 to lysine 318 adopts an RING-type; atypical zinc-finger fold.

The protein resides in the membrane. The polypeptide is RING finger protein 150 (Rnf150) (Mus musculus (Mouse)).